A 370-amino-acid chain; its full sequence is MATHKLLLLPGDGIGTEVMAEVSRLIDWLNKAGIASFETEHGLVGGAAYDADKVAITDATMALAQASDAVIFGAVGGPKWDAVPYDARPEAGLLRLRKDLALFANLRPAVCYPALAEASSLKPEVVEGLDIMIVRELTGGVYFGEPKTITDLGNGQKRAIDTQVYDTYEIERIGRVAFDLARKRRNKVTSMEKRNVMKTGVLWNEVITQVHAREYKDVQLEHQLADSGGMNLVKWPKQFDVIVTDNLFGDMLSDIAAMLTGSLGMLPSASLGAVDDTTGKRKAMYEPVHGSAPDIAGKGLANPVAMLASFGMALRYSLDMGELADKLDEAIAVVLARGLRTADIKSEGSTVVSTSQMGEAIVQEMQALHG.

Residue 77-90 (GPKWDAVPYDARPE) coordinates NAD(+). Arg97, Arg107, Arg135, and Asp226 together coordinate substrate. 3 residues coordinate Mg(2+): Asp226, Asp250, and Asp254. Residue 290–302 (GSAPDIAGKGLAN) participates in NAD(+) binding.

Belongs to the isocitrate and isopropylmalate dehydrogenases family. LeuB type 1 subfamily. In terms of assembly, homodimer. Mg(2+) serves as cofactor. Requires Mn(2+) as cofactor.

It is found in the cytoplasm. It catalyses the reaction (2R,3S)-3-isopropylmalate + NAD(+) = 4-methyl-2-oxopentanoate + CO2 + NADH. Its pathway is amino-acid biosynthesis; L-leucine biosynthesis; L-leucine from 3-methyl-2-oxobutanoate: step 3/4. In terms of biological role, catalyzes the oxidation of 3-carboxy-2-hydroxy-4-methylpentanoate (3-isopropylmalate) to 3-carboxy-4-methyl-2-oxopentanoate. The product decarboxylates to 4-methyl-2 oxopentanoate. This Rhodopseudomonas palustris (strain HaA2) protein is 3-isopropylmalate dehydrogenase.